We begin with the raw amino-acid sequence, 400 residues long: Phosphoglycerate kinase (400 aa).

Residues 24-26, Arg39, 62-65, Arg123, and Arg156 each bind substrate; these read DFN and HLGK. ATP-binding positions include Lys207, Gly298, Glu329, and 356–359; that span reads GGDS.

This sequence belongs to the phosphoglycerate kinase family. As to quaternary structure, monomer.

The protein resides in the cytoplasm. It catalyses the reaction (2R)-3-phosphoglycerate + ATP = (2R)-3-phospho-glyceroyl phosphate + ADP. It functions in the pathway carbohydrate degradation; glycolysis; pyruvate from D-glyceraldehyde 3-phosphate: step 2/5. The chain is Phosphoglycerate kinase from Clostridioides difficile (strain 630) (Peptoclostridium difficile).